Consider the following 598-residue polypeptide: ATP-dependent lipid A-core flippase (598 aa).

The segment covering 1-15 (MSQAYQPDSTKTSAK) has biased composition (polar residues). Positions 1-21 (MSQAYQPDSTKTSAKTPVAPT) are disordered. The next 4 membrane-spanning stretches (helical) occupy residues 44–64 (WWAI…EIWI), 85–105 (LFPF…FLGN), 172–192 (VVAL…ILFV), and 269–289 (INTP…VWLA). Positions 48–329 (LLTIIGFAIN…LTDVNQQLQR (282 aa)) constitute an ABC transmembrane type-1 domain. One can recognise an ABC transporter domain in the interval 360 to 595 (IKLDNVSLVY…HGHYAQMYAR (236 aa)). An ATP-binding site is contributed by 393 to 400 (GRSGAGKS).

Belongs to the ABC transporter superfamily. Lipid exporter (TC 3.A.1.106) family. In terms of assembly, homodimer.

The protein localises to the cell inner membrane. The catalysed reaction is ATP + H2O + lipid A-core oligosaccharideSide 1 = ADP + phosphate + lipid A-core oligosaccharideSide 2.. In terms of biological role, involved in lipopolysaccharide (LPS) biosynthesis. Translocates lipid A-core from the inner to the outer leaflet of the inner membrane. Transmembrane domains (TMD) form a pore in the inner membrane and the ATP-binding domain (NBD) is responsible for energy generation. This chain is ATP-dependent lipid A-core flippase, found in Psychrobacter cryohalolentis (strain ATCC BAA-1226 / DSM 17306 / VKM B-2378 / K5).